The chain runs to 654 residues: Probable Xaa-Pro aminopeptidase P (654 aa).

The Mn(2+) site is built by Asp449, Asp460, Glu558, and Glu572.

This sequence belongs to the peptidase M24B family. Mn(2+) is required as a cofactor.

It carries out the reaction Release of any N-terminal amino acid, including proline, that is linked to proline, even from a dipeptide or tripeptide.. Catalyzes the removal of a penultimate prolyl residue from the N-termini of peptides. The sequence is that of Probable Xaa-Pro aminopeptidase P (ampp) from Neosartorya fischeri (strain ATCC 1020 / DSM 3700 / CBS 544.65 / FGSC A1164 / JCM 1740 / NRRL 181 / WB 181) (Aspergillus fischerianus).